A 320-amino-acid chain; its full sequence is MIRSIFIPPTSITATSRLFYGMRAYSTKLEKASLQKYLHDPVKVTVIPITDKESFIYYKHTDNLFNSQSRILKAEKWIVEKSAKLWRKLKKSPKSYNKKIVSMVQSLLNSTPWSENSLLTIPSESYILKRIKGEKDKTQEIRLTLKDYTVKAEQVDTQPLHVYYPPGISSPDECLRQMKKLYQEGLIYHKKWTLYCLLGLPLTIPLILIPLIPNVPGFYLSYRAYVNIKAYLGAKHLKSLLESSKQNLEFRELLGYTEVYKRGTSSRTQGNQKESKGAPELLLNKKTLPLILDFLEVHELESDLNKVILQESKSQEKNKI.

This sequence to S.pombe SpAC23H3.12c.

This is an uncharacterized protein from Saccharomyces cerevisiae (strain ATCC 204508 / S288c) (Baker's yeast).